A 311-amino-acid chain; its full sequence is tRNA dimethylallyltransferase (311 aa).

13–20 (GPTASGKT) contacts ATP. Residue 15-20 (TASGKT) coordinates substrate. 2 interaction with substrate tRNA regions span residues 38–41 (DSMQ) and 166–170 (QRVLR).

The protein belongs to the IPP transferase family. As to quaternary structure, monomer. The cofactor is Mg(2+).

The enzyme catalyses adenosine(37) in tRNA + dimethylallyl diphosphate = N(6)-dimethylallyladenosine(37) in tRNA + diphosphate. Catalyzes the transfer of a dimethylallyl group onto the adenine at position 37 in tRNAs that read codons beginning with uridine, leading to the formation of N6-(dimethylallyl)adenosine (i(6)A). This Staphylococcus aureus (strain Mu3 / ATCC 700698) protein is tRNA dimethylallyltransferase.